The sequence spans 295 residues: Acetylglutamate kinase (295 aa).

Residues 64-65 (GG), Arg86, and Asn190 contribute to the substrate site.

Belongs to the acetylglutamate kinase family. ArgB subfamily.

The protein resides in the cytoplasm. It carries out the reaction N-acetyl-L-glutamate + ATP = N-acetyl-L-glutamyl 5-phosphate + ADP. The protein operates within amino-acid biosynthesis; L-arginine biosynthesis; N(2)-acetyl-L-ornithine from L-glutamate: step 2/4. Catalyzes the ATP-dependent phosphorylation of N-acetyl-L-glutamate. This chain is Acetylglutamate kinase, found in Pelotomaculum thermopropionicum (strain DSM 13744 / JCM 10971 / SI).